The chain runs to 200 residues: MTDIAASASQPALVRNELNLVWLDMEMTGLDPDNDRIIEIAVVVTNSTLDIAVEGPVFAIHQSDETLAKMDDWNKSTHGRSGLIDRVRASTVTEAQAAAQLQAFLADYVSPGKSPMCGNSICQDRRFMARWMPEFERFFHYRNLDVSTLKELCRRWQPAIYKGFQKRAMHTALADIHESIDELKYYREHFLIPAAPASAA.

The Exonuclease domain occupies 20–183 (LVWLDMEMTG…ADIHESIDEL (164 aa)). Residue Y141 is part of the active site.

It belongs to the oligoribonuclease family.

It is found in the cytoplasm. In terms of biological role, 3'-to-5' exoribonuclease specific for small oligoribonucleotides. The protein is Oligoribonuclease of Burkholderia vietnamiensis (strain G4 / LMG 22486) (Burkholderia cepacia (strain R1808)).